We begin with the raw amino-acid sequence, 62 residues long: Large ribosomal subunit protein uL30 (62 aa).

Belongs to the universal ribosomal protein uL30 family. Part of the 50S ribosomal subunit.

The polypeptide is Large ribosomal subunit protein uL30 (Staphylococcus carnosus (strain TM300)).